Here is a 599-residue protein sequence, read N- to C-terminus: NTPase KAP family P-loop domain-containing protein 1 (599 aa).

The KAP NTPase domain maps to 1-416; it reads MQQEAAQRES…NTVPITVRLL (416 aa). A run of 3 helical transmembrane segments spans residues 25–45, 119–139, and 156–176; these read GWGV…ITEL, VCLA…LLYL, and ALGG…VYSV. Residues 543–599 are disordered; sequence ALKPPSPPKSPSQDGPQASPRAIIAAGTSHAGQGSGHSKEAHQTRDRTHGGKPRPMA. Over residues 579-591 the composition is skewed to basic and acidic residues; that stretch reads HSKEAHQTRDRTH.

Its subcellular location is the membrane. The protein is NTPase KAP family P-loop domain-containing protein 1 (Nkpd1) of Mus musculus (Mouse).